Reading from the N-terminus, the 296-residue chain is Acetaldehyde dehydrogenase (296 aa).

Residue 15–18 (SGNI) coordinates NAD(+). The active-site Acyl-thioester intermediate is Cys132. NAD(+)-binding positions include 164 to 172 (SAGPATRAN) and Asn274.

This sequence belongs to the acetaldehyde dehydrogenase family. As to quaternary structure, interacts with MhpE.

It carries out the reaction acetaldehyde + NAD(+) + CoA = acetyl-CoA + NADH + H(+). It participates in aromatic compound metabolism; 3-phenylpropanoate degradation. Its function is as follows. Catalyzes the conversion of acetaldehyde to acetyl-CoA, using NAD(+) and coenzyme A. Is the final enzyme in the meta-cleavage pathway for the degradation of aromatic compounds. This is Acetaldehyde dehydrogenase from Pectobacterium atrosepticum (strain SCRI 1043 / ATCC BAA-672) (Erwinia carotovora subsp. atroseptica).